The following is a 922-amino-acid chain: Protein translocase subunit SecA (922 aa).

ATP is bound by residues Gln87, 105-109 (GEGKT), and Asp519. The segment at 850–891 (HASRQMRSIQGNAQHNSMGSFSGSGHGMGPTALSARSRPENA) is disordered. Residues 854–865 (QMRSIQGNAQHN) are compositionally biased toward polar residues. 4 residues coordinate Zn(2+): Cys906, Cys908, Cys917, and Cys918.

It belongs to the SecA family. As to quaternary structure, monomer and homodimer. Part of the essential Sec protein translocation apparatus which comprises SecA, SecYEG and auxiliary proteins SecDF. Other proteins may also be involved. Zn(2+) is required as a cofactor.

It localises to the cell inner membrane. The protein resides in the cytoplasm. It catalyses the reaction ATP + H2O + cellular proteinSide 1 = ADP + phosphate + cellular proteinSide 2.. Its function is as follows. Part of the Sec protein translocase complex. Interacts with the SecYEG preprotein conducting channel. Has a central role in coupling the hydrolysis of ATP to the transfer of proteins into and across the cell membrane, serving as an ATP-driven molecular motor driving the stepwise translocation of polypeptide chains across the membrane. The chain is Protein translocase subunit SecA from Treponema denticola (strain ATCC 35405 / DSM 14222 / CIP 103919 / JCM 8153 / KCTC 15104).